The primary structure comprises 272 residues: uncharacterized protein (272 aa).

4 helical membrane passes run 9–29 (PVGF…GSGV), 38–58 (LTSF…SFPP), 154–174 (AGEF…VLML), and 188–208 (AIAL…FNPI). The Cytoplasmic segment spans residues 209-272 (AAKLEEKTES…KTKKGSVHEA (64 aa)).

This sequence belongs to the MotA family.

It is found in the cell membrane. May be involved in some transport function. This is an uncharacterized protein from Bacillus subtilis (strain 168).